A 431-amino-acid chain; its full sequence is Chaperone SurA (431 aa).

A signal peptide spans 1-20 (MKLTVVTFALLAFISFNTFA). 2 PpiC domains span residues 171–272 (QAEY…KIID) and 281–381 (VAEL…QLMD).

The protein resides in the periplasm. It catalyses the reaction [protein]-peptidylproline (omega=180) = [protein]-peptidylproline (omega=0). Chaperone involved in the correct folding and assembly of outer membrane proteins. Recognizes specific patterns of aromatic residues and the orientation of their side chains, which are found more frequently in integral outer membrane proteins. May act in both early periplasmic and late outer membrane-associated steps of protein maturation. This chain is Chaperone SurA, found in Pseudoalteromonas atlantica (strain T6c / ATCC BAA-1087).